Here is a 232-residue protein sequence, read N- to C-terminus: Probable metallo-hydrolase M6_Spy0554 (232 aa).

Zn(2+) contacts are provided by His75, His77, Asp79, His80, His155, Asp174, and His215.

The cofactor is Zn(2+).

This is Probable metallo-hydrolase M6_Spy0554 from Streptococcus pyogenes serotype M6 (strain ATCC BAA-946 / MGAS10394).